The chain runs to 203 residues: MKLLHIDSSILGDNSASRQLSHSVVEAWKAAHPATVVTYRDLANDAISHFSAATLVAAGTAAELRDAAQKHEAQLSAQALAEFKAADTVVVAAPMYNFTIPTQLKAWIDRIAVAGETFRYTEAGPQGLCGGKKVIVVSTSGGLHVGQATGVAHEDYLKVLFGFFGITDVEFVRAHGLAYGEEVRSKAMSDAQAQISQQLFAAA.

FMN-binding positions include Ser-9, 15 to 17, 95 to 98, and 139 to 142; these read SAS, MYNF, and TSGG.

The protein belongs to the azoreductase type 1 family. As to quaternary structure, homodimer. FMN serves as cofactor.

The enzyme catalyses 2 a quinone + NADH + H(+) = 2 a 1,4-benzosemiquinone + NAD(+). It catalyses the reaction N,N-dimethyl-1,4-phenylenediamine + anthranilate + 2 NAD(+) = 2-(4-dimethylaminophenyl)diazenylbenzoate + 2 NADH + 2 H(+). Quinone reductase that provides resistance to thiol-specific stress caused by electrophilic quinones. Functionally, also exhibits azoreductase activity. Catalyzes the reductive cleavage of the azo bond in aromatic azo compounds to the corresponding amines. In Pseudomonas fluorescens (strain ATCC BAA-477 / NRRL B-23932 / Pf-5), this protein is FMN-dependent NADH:quinone oxidoreductase 5.